Here is a 422-residue protein sequence, read N- to C-terminus: L-threonine dehydratase biosynthetic IlvA (422 aa).

N6-(pyridoxal phosphate)lysine is present on Lys56. Pyridoxal 5'-phosphate contacts are provided by residues Asn83, 189–193 (GGGGL), and Ser315. The ACT-like domain maps to 339-413 (HYFILNFPQR…FDPSNIYINE (75 aa)).

It belongs to the serine/threonine dehydratase family. Homotetramer. Pyridoxal 5'-phosphate is required as a cofactor.

It carries out the reaction L-threonine = 2-oxobutanoate + NH4(+). Its pathway is amino-acid biosynthesis; L-isoleucine biosynthesis; 2-oxobutanoate from L-threonine: step 1/1. In terms of biological role, catalyzes the anaerobic formation of alpha-ketobutyrate and ammonia from threonine in a two-step reaction. The first step involved a dehydration of threonine and a production of enamine intermediates (aminocrotonate), which tautomerizes to its imine form (iminobutyrate). Both intermediates are unstable and short-lived. The second step is the nonenzymatic hydrolysis of the enamine/imine intermediates to form 2-ketobutyrate and free ammonia. In the low water environment of the cell, the second step is accelerated by RidA. This is L-threonine dehydratase biosynthetic IlvA (ilvA) from Staphylococcus aureus (strain NCTC 8325 / PS 47).